The primary structure comprises 554 residues: Probable efflux pump gsfJ (554 aa).

A run of 14 helical transmembrane segments spans residues 54–74 (LAAVVFSLMLGMFLVALDNTI), 93–115 (SWYGSAYLMTFGCGFQSTWGKFY), 120–140 (IKVWFLVAVFIFEVGSLICAV), 152–172 (AIAGFGGSGVGVGIFTIIGFA), 181–201 (LLGFTGATYGIAAVLGPLIGG), 206–226 (KCFYINLPIGGVAAGTIFLLF), 248–268 (LVGATLMMGLIVSYILALQYG), 279–299 (VIGLLVGFFLFVLAFVTWEIY), 321–341 (IYMFFFSGAYFIILYYLPIYF), 349–369 (PIGSGVKMLALIIPLTLAAIV), 379–399 (IVPLFWIIGGALGTVGCGLFY), 410–430 (WVGYQIIVGFSTGWTFQIAMS), 447–467 (IVNFFMTVGGAFFISAAQCAF), and 518–538 (VFAITIAAFGVATVIGFFGSW).

It belongs to the major facilitator superfamily.

The protein localises to the membrane. In terms of biological role, probable efflux pump; part of the gene cluster that mediates the biosynthesis of griseofulvin. The chain is Probable efflux pump gsfJ from Penicillium aethiopicum.